Reading from the N-terminus, the 650-residue chain is Acetyl-coenzyme A synthetase (650 aa).

Residues 191–194, T311, and N335 each bind CoA; that span reads RGGR. Residues 387–389, 411–416, D501, and R516 contribute to the ATP site; these read GEP and DTWWQT. A CoA-binding site is contributed by S524. Residue R527 coordinates ATP. Mg(2+) contacts are provided by V538, H540, and I543. Residue R585 coordinates CoA. K610 is subject to N6-acetyllysine.

The protein belongs to the ATP-dependent AMP-binding enzyme family. Mg(2+) is required as a cofactor. Acetylated. Deacetylation by the SIR2-homolog deacetylase activates the enzyme.

The catalysed reaction is acetate + ATP + CoA = acetyl-CoA + AMP + diphosphate. Its function is as follows. Catalyzes the conversion of acetate into acetyl-CoA (AcCoA), an essential intermediate at the junction of anabolic and catabolic pathways. AcsA undergoes a two-step reaction. In the first half reaction, AcsA combines acetate with ATP to form acetyl-adenylate (AcAMP) intermediate. In the second half reaction, it can then transfer the acetyl group from AcAMP to the sulfhydryl group of CoA, forming the product AcCoA. The protein is Acetyl-coenzyme A synthetase of Vibrio vulnificus (strain CMCP6).